The primary structure comprises 203 residues: ER membrane protein complex subunit 8/9 homolog (203 aa).

The region spanning 4–140 (YKVSERAYAK…IQVFNCPGDS (137 aa)) is the MPN domain.

This sequence belongs to the EMC8/EMC9 family. Component of the ER membrane protein complex (EMC).

Its subcellular location is the endoplasmic reticulum membrane. Its function is as follows. Part of the endoplasmic reticulum membrane protein complex (EMC) that enables the energy-independent insertion into endoplasmic reticulum membranes of newly synthesized multi-pass membrane proteins like rhodopsins. The polypeptide is ER membrane protein complex subunit 8/9 homolog (Drosophila melanogaster (Fruit fly)).